The chain runs to 265 residues: Thiazole synthase (265 aa).

The active-site Schiff-base intermediate with DXP is Lys-106. 1-deoxy-D-xylulose 5-phosphate-binding positions include Gly-167, 193–194 (AG), and 215–216 (NT). The disordered stretch occupies residues 245–265 (GRIPRRARAEPSSPQLGLVGS).

It belongs to the ThiG family. Homotetramer. Forms heterodimers with either ThiH or ThiS.

It localises to the cytoplasm. The catalysed reaction is [ThiS sulfur-carrier protein]-C-terminal-Gly-aminoethanethioate + 2-iminoacetate + 1-deoxy-D-xylulose 5-phosphate = [ThiS sulfur-carrier protein]-C-terminal Gly-Gly + 2-[(2R,5Z)-2-carboxy-4-methylthiazol-5(2H)-ylidene]ethyl phosphate + 2 H2O + H(+). Its pathway is cofactor biosynthesis; thiamine diphosphate biosynthesis. Its function is as follows. Catalyzes the rearrangement of 1-deoxy-D-xylulose 5-phosphate (DXP) to produce the thiazole phosphate moiety of thiamine. Sulfur is provided by the thiocarboxylate moiety of the carrier protein ThiS. In vitro, sulfur can be provided by H(2)S. The sequence is that of Thiazole synthase from Methylobacterium sp. (strain 4-46).